We begin with the raw amino-acid sequence, 299 residues long: Very long chain fatty acid elongase 5 (299 aa).

Met1 bears the N-acetylmethionine mark. 7 helical membrane-spanning segments follow: residues 26-46 (WFLL…LLIV), 64-84 (ILVV…CELV), 112-132 (VLWW…FFIL), 139-158 (ITVL…WFVM), 168-187 (FGAT…YGLS), 205-225 (GQLL…IWPC), and 226-246 (TFPL…IALF). The interval 274–299 (MAAVNGHTNSFSPLENNVKPRKLRKD) is disordered. The segment covering 279–288 (GHTNSFSPLE) has biased composition (polar residues). Ser285 carries the phosphoserine modification.

Belongs to the ELO family. ELOVL5 subfamily. As to quaternary structure, interacts with TECR. As to expression, ubiquitous. Highly expressed in the adrenal gland and testis. Weakly expressed in prostate, lung and brain. Expressed in the cerebellum.

Its subcellular location is the endoplasmic reticulum membrane. The protein resides in the cell projection. It localises to the dendrite. It catalyses the reaction a very-long-chain acyl-CoA + malonyl-CoA + H(+) = a very-long-chain 3-oxoacyl-CoA + CO2 + CoA. The enzyme catalyses (6Z,9Z,12Z)-octadecatrienoyl-CoA + malonyl-CoA + H(+) = (8Z,11Z,14Z)-3-oxoeicosatrienoyl-CoA + CO2 + CoA. The catalysed reaction is (9Z,12Z,15Z)-octadecatrienoyl-CoA + malonyl-CoA + H(+) = (11Z,14Z,17Z)-3-oxoeicosatrienoyl-CoA + CO2 + CoA. It carries out the reaction (9Z)-hexadecenoyl-CoA + malonyl-CoA + H(+) = 3-oxo-(11Z)-octadecenoyl-CoA + CO2 + CoA. It catalyses the reaction (9Z)-octadecenoyl-CoA + malonyl-CoA + H(+) = 3-oxo-(11Z)-eicosenoyl-CoA + CO2 + CoA. The enzyme catalyses (11Z)-octadecenoyl-CoA + malonyl-CoA + H(+) = 3-oxo-(13Z)-eicosenoyl-CoA + CO2 + CoA. The catalysed reaction is (9Z,12Z)-octadecadienoyl-CoA + malonyl-CoA + H(+) = (11Z,14Z)-3-oxoicosa-11,14-dienoyl-CoA + CO2 + CoA. It carries out the reaction (6Z,9Z,12Z,15Z)-octadecatetraenoyl-CoA + malonyl-CoA + H(+) = (8Z,11Z,14Z,17Z)-3-oxoicosatetraenoyl-CoA + CO2 + CoA. It catalyses the reaction (5Z,8Z,11Z,14Z)-eicosatetraenoyl-CoA + malonyl-CoA + H(+) = (7Z,10Z,13Z,16Z)-3-oxodocosatetraenoyl-CoA + CO2 + CoA. The enzyme catalyses (5Z,8Z,11Z,14Z,17Z)-eicosapentaenoyl-CoA + malonyl-CoA + H(+) = 3-oxo-(7Z,10Z,13Z,16Z,19Z)-docosapentaenoyl-CoA + CO2 + CoA. It participates in lipid metabolism; polyunsaturated fatty acid biosynthesis. Catalyzes the first and rate-limiting reaction of the four reactions that constitute the long-chain fatty acids elongation cycle. This endoplasmic reticulum-bound enzymatic process allows the addition of 2 carbons to the chain of long- and very long-chain fatty acids (VLCFAs) per cycle. Condensing enzyme that acts specifically toward polyunsaturated acyl-CoA with the higher activity toward C18:3(n-6) acyl-CoA. May participate in the production of monounsaturated and of polyunsaturated VLCFAs of different chain lengths that are involved in multiple biological processes as precursors of membrane lipids and lipid mediators. In conditions where the essential linoleic and alpha linoleic fatty acids are lacking it is also involved in the synthesis of Mead acid from oleic acid. The sequence is that of Very long chain fatty acid elongase 5 from Homo sapiens (Human).